The chain runs to 812 residues: Probable inorganic carbon transporter subunit DabA (812 aa).

Residues C339, D341, H501, and C516 each contribute to the Zn(2+) site.

It belongs to the inorganic carbon transporter (TC 9.A.2) DabA family. As to quaternary structure, forms a complex with DabB. Requires Zn(2+) as cofactor.

The protein localises to the cell inner membrane. Its function is as follows. Part of an energy-coupled inorganic carbon pump. The sequence is that of Probable inorganic carbon transporter subunit DabA from Xanthomonas axonopodis pv. citri (strain 306).